The sequence spans 620 residues: Chaperone protein DnaK (620 aa).

The residue at position 174 (Thr-174) is a Phosphothreonine; by autocatalysis. The segment at Ala-590–Val-620 is disordered.

The protein belongs to the heat shock protein 70 family.

Acts as a chaperone. The chain is Chaperone protein DnaK from Lachnoclostridium phytofermentans (strain ATCC 700394 / DSM 18823 / ISDg) (Clostridium phytofermentans).